The chain runs to 880 residues: MSDMSLKDLAKDLNKSEEILVKQFADAGIKKSASDKVSLAEKQTLTSFLQKQHGGESKTKMTLQRKTKSTLNVKGSTGQAKAVQVEVRKKRTYVKRSDSETQETQAAELADQQAANDKLQAEIEAKKLLVEKALAEKLAAKKEADEKAKKAAAANKEKQTAVKSEKTAEQIASEKESAALLKKADQEASAKAEKETAQQAADAKKLVEENSARWAEEETARKKAAEGGDYHITSSKEAQAAEDVLDSKAEGPSRRKKKKKAPVEEKFQGRRTRRGKKQRPATPSALQQAFEKPAAPVERNVRIGETITVAELANKMAVKATEVIKAMMKMGAMATINQVIDQETATIVAEEMGHKVILTKENELEEAVMAEAQQGGDRTSRAPVVTIMGHVDHGKTSLLDYIRRAKVADGEAGGITQHIGAYHVETDKGMISFLDTPGHAAFTSMRSRGAKATDIVILVVAADDGVMPQTIEAIQHAKAAKVPLIVAVNKIDKEGADFDRVKSELSQHNIISEEWGGENIFTYVSAKVGTGVDGLLESILLQAEMLDLSAVAKGPAAGVVIESRLDKGRGPVASILVQHGELKLGDILLCGLEYGRVRAMRDENGKPIEVAGPSIPVEVLGLSGVPMAGDEATVVKDEKKAREVALYRQGKFRDIKLARQQKAKLDNMFANMEAGEVSELNIVLKADVQGSLEAICESLNKLSTDEVKVNIIGRGVGGITETDASLASASGAIVIGFNVRADASARKLIENEGVDLHYYSIIYGLIDEVRAAMSGLLAPEYRQEITGIADVREVFKSPKIGAIAGCMVTEGTIKRNNPIRVLRENIVIYEGVLESLRRFRDDLSEVRNGMECGIGVKNYNDVRVGDQIEVFETIEIKRTL.

Disordered stretches follow at residues lysine 51–glycine 78, tyrosine 93–asparagine 116, and lysine 142–proline 293. Residues serine 69–glycine 78 show a composition bias toward polar residues. The span at lysine 142–aspartate 229 shows a compositional bias: basic and acidic residues. Residues glycine 269 to arginine 279 show a composition bias toward basic residues. One can recognise a tr-type G domain in the interval serine 380–serine 549. Positions glycine 389–threonine 396 are G1. A GTP-binding site is contributed by glycine 389 to threonine 396. The G2 stretch occupies residues glycine 414–histidine 418. The interval aspartate 435–glycine 438 is G3. GTP-binding positions include aspartate 435–histidine 439 and asparagine 489–aspartate 492. The segment at asparagine 489–aspartate 492 is G4. The G5 stretch occupies residues serine 525–lysine 527.

The protein belongs to the TRAFAC class translation factor GTPase superfamily. Classic translation factor GTPase family. IF-2 subfamily.

The protein resides in the cytoplasm. One of the essential components for the initiation of protein synthesis. Protects formylmethionyl-tRNA from spontaneous hydrolysis and promotes its binding to the 30S ribosomal subunits. Also involved in the hydrolysis of GTP during the formation of the 70S ribosomal complex. In Psychromonas ingrahamii (strain DSM 17664 / CCUG 51855 / 37), this protein is Translation initiation factor IF-2.